Here is a 263-residue protein sequence, read N- to C-terminus: 3-methyl-2-oxobutanoate hydroxymethyltransferase (263 aa).

Residues D46 and D85 each contribute to the Mg(2+) site. 3-methyl-2-oxobutanoate is bound by residues 46-47, D85, and K115; that span reads DS. Residue E117 coordinates Mg(2+). The active-site Proton acceptor is E180.

This sequence belongs to the PanB family. As to quaternary structure, homodecamer; pentamer of dimers. Mg(2+) serves as cofactor.

Its subcellular location is the cytoplasm. It carries out the reaction 3-methyl-2-oxobutanoate + (6R)-5,10-methylene-5,6,7,8-tetrahydrofolate + H2O = 2-dehydropantoate + (6S)-5,6,7,8-tetrahydrofolate. The protein operates within cofactor biosynthesis; (R)-pantothenate biosynthesis; (R)-pantoate from 3-methyl-2-oxobutanoate: step 1/2. Functionally, catalyzes the reversible reaction in which hydroxymethyl group from 5,10-methylenetetrahydrofolate is transferred onto alpha-ketoisovalerate to form ketopantoate. The polypeptide is 3-methyl-2-oxobutanoate hydroxymethyltransferase (Corynebacterium diphtheriae (strain ATCC 700971 / NCTC 13129 / Biotype gravis)).